A 61-amino-acid polypeptide reads, in one-letter code: Pleurocidin-like peptide WF3 (61 aa).

An N-terminal signal peptide occupies residues methionine 1–cysteine 22. A propeptide spanning residues tyrosine 48–glutamate 61 is cleaved from the precursor.

It belongs to the pleurocidin family.

It is found in the secreted. Its function is as follows. Antimicrobial peptide. This chain is Pleurocidin-like peptide WF3 (ple3), found in Pseudopleuronectes americanus (Winter flounder).